The sequence spans 1339 residues: DNA polymerase alpha catalytic subunit (1339 aa).

Disordered regions lie at residues 1 to 29 and 60 to 89; these read MEDW…SEEE and AKRR…HQQK. Residues 8-19 are compositionally biased toward basic and acidic residues; it reads RSEEQKRCEEKG. 8 residues coordinate Zn(2+): Cys-1179, Cys-1182, Cys-1215, Cys-1218, Cys-1235, Cys-1244, Cys-1274, and Cys-1289. A CysA-type zinc finger spans residues 1179 to 1218; it reads CTHCQLVVPVDPHKYINDMFSSREKPPPTAPFELYVCFNC. Residues 1244–1274 carry the CysB motif motif; the sequence is CSGGNVASVRALRAQFTYLRAMFDVPQALNC.

The protein belongs to the DNA polymerase type-B family.

Its subcellular location is the nucleus. The enzyme catalyses DNA(n) + a 2'-deoxyribonucleoside 5'-triphosphate = DNA(n+1) + diphosphate. Functionally, polymerase alpha in a complex with DNA primase is a replicative polymerase. The sequence is that of DNA polymerase alpha catalytic subunit from Trypanosoma brucei brucei.